Here is an 89-residue protein sequence, read N- to C-terminus: Small ribosomal subunit protein uS15 (89 aa).

The protein belongs to the universal ribosomal protein uS15 family. As to quaternary structure, part of the 30S ribosomal subunit. Forms a bridge to the 50S subunit in the 70S ribosome, contacting the 23S rRNA.

In terms of biological role, one of the primary rRNA binding proteins, it binds directly to 16S rRNA where it helps nucleate assembly of the platform of the 30S subunit by binding and bridging several RNA helices of the 16S rRNA. Forms an intersubunit bridge (bridge B4) with the 23S rRNA of the 50S subunit in the ribosome. The protein is Small ribosomal subunit protein uS15 of Bordetella parapertussis (strain 12822 / ATCC BAA-587 / NCTC 13253).